The sequence spans 157 residues: Nucleoside deoxyribosyltransferase (157 aa).

Glutamate 98 serves as the catalytic Nucleophile.

Belongs to the nucleoside deoxyribosyltransferase family. Homohexamer.

The catalysed reaction is 2-deoxy-D-ribosyl-base(1) + base(2) = 2-deoxy-D-ribosyl-base(2) + base(1).. The protein operates within nucleotide metabolism; nucleotide salvage pathway. Catalyzes the cleavage of the glycosidic bond of 2'-deoxyribonucleosides and the transfer of the deoxyribosyl moiety to an acceptor purine or pyrimidine base. This is Nucleoside deoxyribosyltransferase (ntd) from Lactobacillus leichmannii.